Here is a 453-residue protein sequence, read N- to C-terminus: tRNA modification GTPase MnmE (453 aa).

R22, E79, and K119 together coordinate (6S)-5-formyl-5,6,7,8-tetrahydrofolate. A TrmE-type G domain is found at 215 to 376 (GMKVVIAGRP…LKLHLKSLMG (162 aa)). N225 contributes to the K(+) binding site. GTP-binding positions include 225 to 230 (NAGKSS), 244 to 250 (TEIAGTT), 269 to 272 (DTAG), and 334 to 337 (NKAD). Mg(2+) is bound at residue S229. K(+)-binding residues include T244, I246, and T249. T250 is a binding site for Mg(2+). Residue K453 coordinates (6S)-5-formyl-5,6,7,8-tetrahydrofolate.

It belongs to the TRAFAC class TrmE-Era-EngA-EngB-Septin-like GTPase superfamily. TrmE GTPase family. Homodimer. Heterotetramer of two MnmE and two MnmG subunits. Requires K(+) as cofactor.

The protein resides in the cytoplasm. In terms of biological role, exhibits a very high intrinsic GTPase hydrolysis rate. Involved in the addition of a carboxymethylaminomethyl (cmnm) group at the wobble position (U34) of certain tRNAs, forming tRNA-cmnm(5)s(2)U34. The chain is tRNA modification GTPase MnmE from Shewanella putrefaciens (strain CN-32 / ATCC BAA-453).